A 40-amino-acid polypeptide reads, in one-letter code: Large ribosomal subunit protein bL36A (40 aa).

This sequence belongs to the bacterial ribosomal protein bL36 family.

The polypeptide is Large ribosomal subunit protein bL36A (Paenarthrobacter aurescens (strain TC1)).